Consider the following 349-residue polypeptide: MTELTLQNHCRTMWHFIPGLALSAVITGVALWGGAIPAVAGAGFSALTLAILLGMVIGNTIYPQIWKQCDGGVLFAKQHLLRLGIILYGFRLTFSQIADVGISGIVIDVLTLSSTFMLACFLGQKVFGLDRHTSWLIGAGSSICGAAAVLATEPVVKAEASKVTVAVATVVIFGTIAIFLYPAMYPLLAHWFSPETYGIYIGSTMHEVAQVVAAGHAVSPDAENAAVIAKMLRVMMLAPFLIILAARVKQLSPATGAEKSKITIPWFAIFFIVVAIFNSFHLLPKAVVDMLVTLDTVLLAMAMAALGLTTHVSALKKAGAKPLLMALALFAWLIIGGGAINVLIHSLIA.

The Periplasmic segment spans residues 1-12 (MTELTLQNHCRT). The chain crosses the membrane as a helical span at residues 13–35 (MWHFIPGLALSAVITGVALWGGA). Topologically, residues 36-38 (IPA) are cytoplasmic. A helical membrane pass occupies residues 39–61 (VAGAGFSALTLAILLGMVIGNTI). Residues 62-99 (YPQIWKQCDGGVLFAKQHLLRLGIILYGFRLTFSQIAD) lie on the Periplasmic side of the membrane. Residues 100–122 (VGISGIVIDVLTLSSTFMLACFL) traverse the membrane as a helical segment. Residues 123-131 (GQKVFGLDR) lie on the Cytoplasmic side of the membrane. A helical membrane pass occupies residues 132 to 151 (HTSWLIGAGSSICGAAAVLA). Residues 152–162 (TEPVVKAEASK) lie on the Periplasmic side of the membrane. Residues 163 to 185 (VTVAVATVVIFGTIAIFLYPAMY) form a helical membrane-spanning segment. The Cytoplasmic segment spans residues 186–261 (PLLAHWFSPE…SPATGAEKSK (76 aa)). Residues 262 to 284 (ITIPWFAIFFIVVAIFNSFHLLP) traverse the membrane as a helical segment. Residues 285–290 (KAVVDM) are Periplasmic-facing. Residues 291–313 (LVTLDTVLLAMAMAALGLTTHVS) traverse the membrane as a helical segment. Topologically, residues 314-322 (ALKKAGAKP) are cytoplasmic. The helical transmembrane segment at 323 to 345 (LLMALALFAWLIIGGGAINVLIH) threads the bilayer. Over 346–349 (SLIA) the chain is Periplasmic.

The protein belongs to the UPF0324 family.

It localises to the cell inner membrane. This Salmonella typhimurium (strain LT2 / SGSC1412 / ATCC 700720) protein is UPF0324 inner membrane protein YeiH (yeiH).